The sequence spans 1420 residues: Apolipoprotein(a) (1420 aa).

The span at 19–30 (TAVAPPNVTPVP) shows a compositional bias: low complexity. Residues 19–46 (TAVAPPNVTPVPSLEAPSEQAPTEQRPG) form a disordered region. Kringle domains follow at residues 49-127 (ECYH…LTQC), 163-241 (ECYH…LTQC), 277-355 (ECYH…LTQC), 391-469 (ECYH…LTRC), and 505-583 (ECYY…LTQC). Disulfide bonds link cysteine 50–cysteine 127, cysteine 71–cysteine 110, cysteine 99–cysteine 122, cysteine 164–cysteine 241, cysteine 185–cysteine 224, cysteine 213–cysteine 236, cysteine 278–cysteine 355, cysteine 299–cysteine 338, cysteine 327–cysteine 350, cysteine 392–cysteine 469, cysteine 413–cysteine 452, cysteine 441–cysteine 464, cysteine 506–cysteine 583, cysteine 527–cysteine 566, and cysteine 555–cysteine 578. The tract at residues 598–617 (PDPSTQASSEEAPTEQSPEV) is disordered. Residues 600–616 (PSTQASSEEAPTEQSPE) are compositionally biased toward polar residues. Kringle domains lie at 619-697 (DCYH…LTQC), 725-803 (DCYH…LTQC), 839-917 (DCYQ…LTQC), 953-1031 (DCYH…LTQC), and 1067-1145 (QCYH…LTRC). 19 disulfide bridges follow: cysteine 620–cysteine 697, cysteine 641–cysteine 680, cysteine 669–cysteine 692, cysteine 726–cysteine 803, cysteine 747–cysteine 786, cysteine 775–cysteine 798, cysteine 840–cysteine 917, cysteine 861–cysteine 900, cysteine 889–cysteine 912, cysteine 954–cysteine 1031, cysteine 975–cysteine 1014, cysteine 1003–cysteine 1026, cysteine 1068–cysteine 1145, cysteine 1089–cysteine 1128, cysteine 1117–cysteine 1140, cysteine 1217–cysteine 1233, cysteine 1309–cysteine 1376, cysteine 1339–cysteine 1355, and cysteine 1366–cysteine 1394. In terms of domain architecture, Peptidase S1 spans 1191–1418 (IVGGCVAHPH…FVTWIEGVMR (228 aa)).

Belongs to the peptidase S1 family. Plasminogen subfamily. In terms of assembly, disulfide-linked to apo-B100. Binds to fibronectin and decorin. In terms of processing, N- and O-glycosylated.

Apo(a) is the main constituent of lipoprotein(a) (Lp(a)). It has serine proteinase activity and is able of autoproteolysis. Inhibits tissue-type plasminogen activator 1. Lp(a) may be a ligand for megalin/Gp 330. The protein is Apolipoprotein(a) (LPA) of Macaca mulatta (Rhesus macaque).